Reading from the N-terminus, the 156-residue chain is dCTP deaminase (156 aa).

Residues 79–84 (RSTFAR), Asp95, Gln124, and Tyr138 each bind dCTP.

The protein belongs to the dCTP deaminase family. Homotrimer.

The catalysed reaction is dCTP + H2O + H(+) = dUTP + NH4(+). It participates in pyrimidine metabolism; dUMP biosynthesis; dUMP from dCTP (dUTP route): step 1/2. Its function is as follows. Catalyzes the deamination of dCTP to dUTP. This Thermococcus sibiricus (strain DSM 12597 / MM 739) protein is dCTP deaminase.